Consider the following 195-residue polypeptide: Holliday junction branch migration complex subunit RuvA (195 aa).

The domain I stretch occupies residues 1–64 (MIGRIAGLLL…EDAHLLFGFM (64 aa)). The domain II stretch occupies residues 65-140 (TEPERVLFRQ…KISPAITLPE (76 aa)). The interval 140-144 (ETGTA) is flexible linker. The tract at residues 145 to 195 (MASSTDKDILNALSALGYNDREANWAVGQLSEGVTVSDGIMQSLRLLSKAK) is domain III.

It belongs to the RuvA family. Homotetramer. Forms an RuvA(8)-RuvB(12)-Holliday junction (HJ) complex. HJ DNA is sandwiched between 2 RuvA tetramers; dsDNA enters through RuvA and exits via RuvB. An RuvB hexamer assembles on each DNA strand where it exits the tetramer. Each RuvB hexamer is contacted by two RuvA subunits (via domain III) on 2 adjacent RuvB subunits; this complex drives branch migration. In the full resolvosome a probable DNA-RuvA(4)-RuvB(12)-RuvC(2) complex forms which resolves the HJ.

The protein localises to the cytoplasm. Its function is as follows. The RuvA-RuvB-RuvC complex processes Holliday junction (HJ) DNA during genetic recombination and DNA repair, while the RuvA-RuvB complex plays an important role in the rescue of blocked DNA replication forks via replication fork reversal (RFR). RuvA specifically binds to HJ cruciform DNA, conferring on it an open structure. The RuvB hexamer acts as an ATP-dependent pump, pulling dsDNA into and through the RuvAB complex. HJ branch migration allows RuvC to scan DNA until it finds its consensus sequence, where it cleaves and resolves the cruciform DNA. The sequence is that of Holliday junction branch migration complex subunit RuvA from Nitrosomonas europaea (strain ATCC 19718 / CIP 103999 / KCTC 2705 / NBRC 14298).